We begin with the raw amino-acid sequence, 329 residues long: GTP 3',8-cyclase (329 aa).

The Radical SAM core domain occupies 1–229; the sequence is MNPVDYLRIS…TAFVQGNGPA (229 aa). Arg8 provides a ligand contact to GTP. Positions 15 and 19 each coordinate [4Fe-4S] cluster. Tyr21 lines the S-adenosyl-L-methionine pocket. Cys22 is a [4Fe-4S] cluster binding site. Arg60 is a GTP binding site. Position 64 (Gly64) interacts with S-adenosyl-L-methionine. Residue Thr91 coordinates GTP. An S-adenosyl-L-methionine-binding site is contributed by Ser115. Lys155 is a GTP binding site. Met189 is an S-adenosyl-L-methionine binding site. [4Fe-4S] cluster-binding residues include Cys252 and Cys255. 257–259 provides a ligand contact to GTP; it reads RMR. Residue Cys269 coordinates [4Fe-4S] cluster.

It belongs to the radical SAM superfamily. MoaA family. Monomer and homodimer. Requires [4Fe-4S] cluster as cofactor.

It catalyses the reaction GTP + AH2 + S-adenosyl-L-methionine = (8S)-3',8-cyclo-7,8-dihydroguanosine 5'-triphosphate + 5'-deoxyadenosine + L-methionine + A + H(+). Its pathway is cofactor biosynthesis; molybdopterin biosynthesis. Catalyzes the cyclization of GTP to (8S)-3',8-cyclo-7,8-dihydroguanosine 5'-triphosphate. This is GTP 3',8-cyclase from Picosynechococcus sp. (strain ATCC 27264 / PCC 7002 / PR-6) (Agmenellum quadruplicatum).